The following is a 330-amino-acid chain: MKDKAYDITIIGGGPIGLFAAFYAGLRGVTVKIIESLSELGGQPAILYPEKMIYDIPAYPSLTGVELTENLIKQLNRFEDRITICLKEEVLTFDKVKGGFSIRTNKAEHFSKAIIIACGNGAFAPRTLGLESEENFADHNLFYNVHQLDQFAGQKVVICGGGDSAVDWALALEDIAESVTVVHRRDAFRAHEHSVELLTTSTVNLLTPYVPKALKGIGNLAEKLVIQKVKEDEVLELELDSLIVSFGFSTSNKNLKNWNLDYKRSSITVSPLFQTSQEGIFAIGDAAAYNGKVDLIATGFGEAPTAVNQAINYIYPDRDNRVVHSTSLID.

FAD-binding residues include Glu35, Gln43, Tyr48, Val90, Phe123, Asp285, and Thr326.

It belongs to the ferredoxin--NADP reductase type 2 family. Homodimer. FAD is required as a cofactor.

It carries out the reaction 2 reduced [2Fe-2S]-[ferredoxin] + NADP(+) + H(+) = 2 oxidized [2Fe-2S]-[ferredoxin] + NADPH. The chain is Ferredoxin--NADP reductase from Streptococcus pyogenes serotype M28 (strain MGAS6180).